A 317-amino-acid polypeptide reads, in one-letter code: uncharacterized protein (317 aa).

The N-terminal stretch at 1-16 (MKLSFILSTLVAGALA) is a signal peptide. N-linked (GlcNAc...) asparagine glycosylation is present at N42. Low complexity-rich tracts occupy residues 150–238 (SSST…SSSS) and 247–259 (TASTDDSSSASSA). Residues 150 to 259 (SSSTPSSSSS…TDDSSSASSA (110 aa)) are disordered.

This is an uncharacterized protein from Schizosaccharomyces pombe (strain 972 / ATCC 24843) (Fission yeast).